The primary structure comprises 296 residues: tRNA uridine(34) hydroxylase (296 aa).

Positions R130–Y225 constitute a Rhodanese domain. Catalysis depends on C185, which acts as the Cysteine persulfide intermediate.

The protein belongs to the TrhO family.

The catalysed reaction is uridine(34) in tRNA + AH2 + O2 = 5-hydroxyuridine(34) in tRNA + A + H2O. In terms of biological role, catalyzes oxygen-dependent 5-hydroxyuridine (ho5U) modification at position 34 in tRNAs. The protein is tRNA uridine(34) hydroxylase of Corynebacterium kroppenstedtii (strain DSM 44385 / JCM 11950 / CIP 105744 / CCUG 35717).